The sequence spans 126 residues: Adenosine 5'-monophosphoramidase HINT1 (126 aa).

N-acetylalanine is present on A2. One can recognise an HIT domain in the interval 18–126 (IFGKIIRKEI…GGRQMNWPPG (109 aa)). N6-acetyllysine is present on residues K21 and K30. Residue 43–44 (DI) participates in AMP binding. Residues S45 and S72 each carry the phosphoserine modification. Residues N99, 105 to 107 (GQS), and 112 to 114 (HLH) each bind AMP. The Histidine triad motif motif lies at 110–114 (HVHLH). The active-site Tele-AMP-histidine intermediate is the H112.

Belongs to the HINT family. Homodimer. Interacts with CDK7. Interacts with RUVBL1 and RUVBL2 and is associated with the LEF1/TCF1-CTNNB1 complex and with a KAT5 histone acetyltransferase complex. Identified in a complex with MITF and CTNNB1. Interacts with CDC34 and RBX1, and is part of a SCF (SKP2-CUL1-F-box protein) E3 ubiquitin-protein ligase complex. Interacts with SUMO1, SUMO2 and RGS17. Interacts with the Ten-1 ICD form of TENM1. Interacts with CALM1; interaction increases in the presence of calcium ions. As to expression, widely expressed.

Its subcellular location is the cytoplasm. The protein resides in the nucleus. It carries out the reaction adenosine 5'-phosphoramidate + H2O = AMP + NH4(+). Its function is as follows. Exhibits adenosine 5'-monophosphoramidase activity, hydrolyzing purine nucleotide phosphoramidates with a single phosphate group such as adenosine 5'monophosphoramidate (AMP-NH2) to yield AMP and NH2. Hydrolyzes adenosine 5'monophosphomorpholidate (AMP-morpholidate) and guanosine 5'monophosphomorpholidate (GMP-morpholidate). Hydrolyzes lysyl-AMP (AMP-N-epsilon-(N-alpha-acetyl lysine methyl ester)) generated by lysine tRNA ligase. Hydrolyzes Met-AMP, His-AMP, Asp-AMP, lysyl-GMP (GMP-N-epsilon-(N-alpha-acetyl lysine methyl ester)) and AMP-N-alanine methyl ester. Can also convert adenosine 5'-O-phosphorothioate and guanosine 5'-O-phosphorothioate to the corresponding nucleoside 5'-O-phosphates with concomitant release of hydrogen sulfide. In addition, functions as a scaffolding protein that modulates transcriptional activation by the LEF1/TCF1-CTNNB1 complex and by the complex formed with MITF and CTNNB1. Modulates p53/TP53 levels and p53/TP53-mediated apoptosis. Modulates proteasomal degradation of target proteins by the SCF (SKP2-CUL1-F-box protein) E3 ubiquitin-protein ligase complex. Also exhibits SUMO-specific isopeptidase activity, deconjugating SUMO1 from RANGAP1 and RGS17. The polypeptide is Adenosine 5'-monophosphoramidase HINT1 (HINT1) (Oryctolagus cuniculus (Rabbit)).